A 264-amino-acid polypeptide reads, in one-letter code: Thiazole synthase (264 aa).

The active-site Schiff-base intermediate with DXP is the lysine 106. 1-deoxy-D-xylulose 5-phosphate contacts are provided by residues glycine 167, 193–194 (AG), and 215–216 (NT).

This sequence belongs to the ThiG family. Homotetramer. Forms heterodimers with either ThiH or ThiS.

Its subcellular location is the cytoplasm. It carries out the reaction [ThiS sulfur-carrier protein]-C-terminal-Gly-aminoethanethioate + 2-iminoacetate + 1-deoxy-D-xylulose 5-phosphate = [ThiS sulfur-carrier protein]-C-terminal Gly-Gly + 2-[(2R,5Z)-2-carboxy-4-methylthiazol-5(2H)-ylidene]ethyl phosphate + 2 H2O + H(+). It participates in cofactor biosynthesis; thiamine diphosphate biosynthesis. Functionally, catalyzes the rearrangement of 1-deoxy-D-xylulose 5-phosphate (DXP) to produce the thiazole phosphate moiety of thiamine. Sulfur is provided by the thiocarboxylate moiety of the carrier protein ThiS. In vitro, sulfur can be provided by H(2)S. The polypeptide is Thiazole synthase (Xanthomonas oryzae pv. oryzae (strain MAFF 311018)).